The following is a 1217-amino-acid chain: Rho family-interacting cell polarization regulator 1 (1217 aa).

Phosphoserine is present on serine 22. The stretch at 83–112 (RGLTAYLEVHQQEQEKLQRQIKESKRNSRL) forms a coiled coil. Phosphoserine is present on residues serine 345 and serine 347. Threonine 351 is subject to Phosphothreonine. The tract at residues 371–413 (NGTAWSLSSESSDDSSSPQLSGTARYSSTPKPLVQQPEPLPVQ) is disordered. 2 stretches are compositionally biased toward low complexity: residues 376–391 (SLSSESSDDSSSPQLS) and 400–413 (PKPLVQQPEPLPVQ). Phosphoserine is present on residues serine 452 and serine 455. The segment at 565 to 762 (TSTTVGSTHK…SPSSIVPEPQ (198 aa)) is disordered. Positions 579–594 (PLTSTGSIPSVTDSIQ) are enriched in polar residues. The segment covering 595–649 (TTTSPTHTTPSPTHTTVSPTHSTPSPTHTTVSPSNAALSPSNATPSLSHSTTSPT) has biased composition (low complexity). Residues 650–661 (QKATMSTHTTSA) are compositionally biased toward polar residues. Positions 664 to 695 (PVQTTTSPISTTVSPSPSVDTAIISSSSAVPS) are enriched in low complexity. Positions 720 to 729 (ACTSSPSLAS) are enriched in polar residues. Serine 742 carries the phosphoserine modification. Residues 786–828 (RRLEEALRTLMAALDDYRGQFPELQGLEQEVTRLESLLMQRQG) adopt a coiled-coil conformation. Residues 850 to 874 (FLNDDEDEDNDSPGDRPTSSPEVVA) form a disordered region. Positions 852–861 (NDDEDEDNDS) are enriched in acidic residues. 2 positions are modified to phosphoserine: serine 868 and serine 869.

It belongs to the RIPOR family. Interacts (via N-terminus) with RHOA (GTP-bound form); this interaction links active RHOA to STK24 and STK26 kinases. Interacts with RHOB. Interacts with RHOC. Interacts (via C-terminus) with PDCD10; this interaction occurs in a Rho-independent manner. Interacts (via C-terminus) with STK24; this interaction occurs in a PDCD10-dependent and Rho-independent manner. Interacts (via C-terminus) with STK26; this interaction occurs in a PDCD10-dependent and Rho-independent manner. Interacts (via N-terminus) with 14-3-3 proteins; these interactions occur in a Rho-dependent manner.

The protein localises to the cytoplasm. It localises to the golgi apparatus. Its function is as follows. Downstream effector protein for Rho-type small GTPases that plays a role in cell polarity and directional migration. Acts as an adapter protein, linking active Rho proteins to STK24 and STK26 kinases, and hence positively regulates Golgi reorientation in polarized cell migration upon Rho activation. Involved in the subcellular relocation of STK26 from the Golgi to cytoplasm punctae in a Rho- and PDCD10-dependent manner upon serum stimulation. The sequence is that of Rho family-interacting cell polarization regulator 1 from Rattus norvegicus (Rat).